Reading from the N-terminus, the 202-residue chain is Putative 5'(3')-deoxyribonucleotidase (202 aa).

The active-site Nucleophile is Asp22. 3 residues coordinate Mg(2+): Asp22, Asp24, and Asp156. Asp24 (proton donor) is an active-site residue.

This sequence belongs to the 5'(3')-deoxyribonucleotidase family. Mg(2+) serves as cofactor.

In terms of biological role, dephosphorylates the 5' and 2'(3')-phosphates of deoxyribonucleotides. The polypeptide is Putative 5'(3')-deoxyribonucleotidase (Chlorobaculum tepidum (strain ATCC 49652 / DSM 12025 / NBRC 103806 / TLS) (Chlorobium tepidum)).